Here is a 462-residue protein sequence, read N- to C-terminus: Metal cation symporter ZIP14 (462 aa).

Positions Met1–Ala16 are cleaved as a signal peptide. Over Gly17–Gly138 the chain is Extracellular. N-linked (GlcNAc...) asparagine glycans are attached at residues Asn42, Asn68, Asn83, and Asn119. A helical transmembrane segment spans residues Phe139–Met159. Residues Lys160 to Leu167 lie on the Cytoplasmic side of the membrane. The chain crosses the membrane as a helical span at residues Leu168–Ile188. Residues Pro189–Tyr201 are Extracellular-facing. Residues Val202–Leu222 traverse the membrane as a helical segment. The Cytoplasmic portion of the chain corresponds to Lys223 to Gly322. The short motif at His230 to Tyr237 is the HHHGHXHX-motif element. The segment at Ser235–Leu285 is disordered. Basic and acidic residues-rich tracts occupy residues Thr241 to Thr251 and Ser269 to Ala279. A helical membrane pass occupies residues Leu323–Ile343. Residues Leu344–Gln367 are Extracellular-facing. The XEXPHE-motif signature appears at Glu346 to Glu351. A helical membrane pass occupies residues Ala368–Leu388. Topologically, residues Ala389–Asn396 are cytoplasmic. Residues Trp397–Glu417 form a helical membrane-spanning segment. At Met418 to Ala431 the chain is on the extracellular side. Residues Phe432 to Leu452 traverse the membrane as a helical segment. Residues Thr453–Gly462 lie on the Cytoplasmic side of the membrane.

Belongs to the ZIP transporter (TC 2.A.5) family. In terms of assembly, homotrimer.

It is found in the cell membrane. It localises to the apical cell membrane. Its subcellular location is the basolateral cell membrane. The protein resides in the early endosome membrane. The protein localises to the late endosome membrane. It is found in the lysosome membrane. The enzyme catalyses Zn(2+)(out) + 2 hydrogencarbonate(out) = Zn(2+)(in) + 2 hydrogencarbonate(in). It carries out the reaction Mn(2+)(out) + 2 hydrogencarbonate(out) = Mn(2+)(in) + 2 hydrogencarbonate(in). The catalysed reaction is Fe(2+)(out) + 2 hydrogencarbonate(out) = Fe(2+)(in) + 2 hydrogencarbonate(in). It catalyses the reaction Cd(2+)(out) + 2 hydrogencarbonate(out) = Cd(2+)(in) + 2 hydrogencarbonate(in). Functionally, electroneutral transporter of the plasma membrane mediating the cellular uptake of the divalent metal cations zinc, manganese and iron that are important for tissue homeostasis, metabolism, development and immunity. Functions as an energy-dependent symporter, transporting through the membranes an electroneutral complex composed of a divalent metal cation and two bicarbonate anions. Beside these endogenous cellular substrates, can also import cadmium a non-essential metal which is cytotoxic and carcinogenic. The sequence is that of Metal cation symporter ZIP14 from Xenopus tropicalis (Western clawed frog).